The primary structure comprises 350 residues: Ribosomal RNA small subunit methyltransferase C (350 aa).

Belongs to the methyltransferase superfamily. RsmC family. In terms of assembly, monomer.

Its subcellular location is the cytoplasm. The catalysed reaction is guanosine(1207) in 16S rRNA + S-adenosyl-L-methionine = N(2)-methylguanosine(1207) in 16S rRNA + S-adenosyl-L-homocysteine + H(+). Functionally, specifically methylates the guanine in position 1207 of 16S rRNA in the 30S particle. This chain is Ribosomal RNA small subunit methyltransferase C, found in Sodalis glossinidius (strain morsitans).